Consider the following 229-residue polypeptide: ATP synthase subunit a (229 aa).

Transmembrane regions (helical) follow at residues 25 to 45 (ADAIAYTWLIIALLLIVSILA), 82 to 102 (FFPLIATLALFILVSNLIGLI), 111 to 131 (NINTTAACAVIVFVTTHIVGI), 142 to 162 (FLGPILWLAPMMFFIEVIGHF), 181 to 201 (LVLMIFFGLAPFLVPLPMMLM), and 202 to 222 (GVLVSFIQAFVFMLLAMIYIQ).

This sequence belongs to the ATPase A chain family. As to quaternary structure, F-type ATPases have 2 components, CF(1) - the catalytic core - and CF(0) - the membrane proton channel. CF(1) has five subunits: alpha(3), beta(3), gamma(1), delta(1), epsilon(1). CF(0) has three main subunits: a(1), b(2) and c(9-12). The alpha and beta chains form an alternating ring which encloses part of the gamma chain. CF(1) is attached to CF(0) by a central stalk formed by the gamma and epsilon chains, while a peripheral stalk is formed by the delta and b chains.

It localises to the cell inner membrane. Functionally, key component of the proton channel; it plays a direct role in the translocation of protons across the membrane. This Geotalea daltonii (strain DSM 22248 / JCM 15807 / FRC-32) (Geobacter daltonii) protein is ATP synthase subunit a.